The sequence spans 509 residues: 2,3-bisphosphoglycerate-independent phosphoglycerate mutase (509 aa).

Position 11 (Asp11) interacts with Mn(2+). A Phosphotyrosine modification is found at Tyr35. Ser61 provides a ligand contact to Mn(2+). Ser61 functions as the Phosphoserine intermediate in the catalytic mechanism. Residues His122, 152 to 153 (RD), Arg184, Arg190, 260 to 263 (RPDR), and Lys335 each bind substrate. Residues Asp402, His406, Asp443, His444, and His461 each coordinate Mn(2+).

Belongs to the BPG-independent phosphoglycerate mutase family. As to quaternary structure, monomer. Requires Mn(2+) as cofactor.

It carries out the reaction (2R)-2-phosphoglycerate = (2R)-3-phosphoglycerate. Its pathway is carbohydrate degradation; glycolysis; pyruvate from D-glyceraldehyde 3-phosphate: step 3/5. Essential for rapid growth and for sporulation. Catalyzes the interconversion of 2-phosphoglycerate and 3-phosphoglycerate. This is 2,3-bisphosphoglycerate-independent phosphoglycerate mutase from Bacillus cereus (strain ATCC 10987 / NRS 248).